An 89-amino-acid chain; its full sequence is Nitrogen regulatory protein (89 aa).

The PTS EIIA type-2 domain occupies Thr-6–Asp-89. The Tele-phosphohistidine intermediate role is filled by His-68.

The protein resides in the cytoplasm. Seems to have a role in regulating nitrogen assimilation. The polypeptide is Nitrogen regulatory protein (ptsN) (Pseudomonas putida (Arthrobacter siderocapsulatus)).